Consider the following 548-residue polypeptide: Chaperonin GroEL (548 aa).

Residues 29-32 (TLGP), lysine 50, 86-90 (DGTTT), glycine 416, and aspartate 497 each bind ATP.

The protein belongs to the chaperonin (HSP60) family. Forms a cylinder of 14 subunits composed of two heptameric rings stacked back-to-back. Interacts with the co-chaperonin GroES.

The protein resides in the cytoplasm. The enzyme catalyses ATP + H2O + a folded polypeptide = ADP + phosphate + an unfolded polypeptide.. Its function is as follows. Together with its co-chaperonin GroES, plays an essential role in assisting protein folding. The GroEL-GroES system forms a nano-cage that allows encapsulation of the non-native substrate proteins and provides a physical environment optimized to promote and accelerate protein folding. This Neorickettsia risticii (Ehrlichia risticii) protein is Chaperonin GroEL.